A 292-amino-acid chain; its full sequence is Glutamate racemase (292 aa).

Substrate contacts are provided by residues 10 to 11 and 42 to 43; these read DS and YG. The Proton donor/acceptor role is filled by Cys-73. 74–75 provides a ligand contact to substrate; it reads NS. Cys-186 serves as the catalytic Proton donor/acceptor. 187–188 contacts substrate; the sequence is TH.

This sequence belongs to the aspartate/glutamate racemases family.

It carries out the reaction L-glutamate = D-glutamate. It functions in the pathway cell wall biogenesis; peptidoglycan biosynthesis. Provides the (R)-glutamate required for cell wall biosynthesis. The protein is Glutamate racemase of Beutenbergia cavernae (strain ATCC BAA-8 / DSM 12333 / CCUG 43141 / JCM 11478 / NBRC 16432 / NCIMB 13614 / HKI 0122).